Reading from the N-terminus, the 305-residue chain is Target of rapamycin complex subunit LST8-1 (305 aa).

7 WD repeats span residues 1–30 (MSQP…CYRT), 33–71 (YPDS…PQPV), 76–115 (SHTN…CQKE), 117–156 (ESVA…CSCE), 160–199 (EVDT…QTMT), 209–248 (AHNG…LEKV), and 251–292 (GHQR…KVYQ).

It belongs to the WD repeat LST8 family. The target of rapamycin complex 1 (TORC1) is composed of at least RAPTOR, LST8 and TOR. Interacts with TOR. Expressed in the root central cylinder, root tips, emerging lateral roots, vasculature of cotyledons, leaf stomata, leaf stipules, anthers, pollen, filaments, and vasculature of petals and sepals.

It localises to the endosome. Component of TORC1 complex, which is an essential cell growth regulator that controls plant development. Acts by activating transcription, protein synthesis and ribosome biogenesis, and inhibiting mRNA degradation and autophagy. Involved in regulating amino acid accumulation and the synthesis of myo-inositol and raffinose during plant adaptation to long days. Involved in the regulation of plant growth and abscisic acid (ABA) accumulation. Acts as a positive regulation of the ABA biosynthetic genes ZEP, NCED3 and AAO3, and negative regulator of the ABA catabolic genes CYP707A2 and CYP707A3. The chain is Target of rapamycin complex subunit LST8-1 from Arabidopsis thaliana (Mouse-ear cress).